The sequence spans 458 residues: Cell death abnormality protein 8 (458 aa).

The Cytoplasmic segment spans residues 1–45 (MFLKKHKSKLLLVPRDEEQEDAGIVAVLTDRIPSVLLVRWFDLFC). The helical transmembrane segment at 46–66 (FGFAMCSYALDFFSDIGIAIF) threads the bilayer. Over 67-77 (HFWAGRYLSGS) the chain is Extracellular. Residues 78-98 (LVLAFALLPSVIINIISMVWM) form a helical membrane-spanning segment. Over 99–123 (LDDEMHWKRRAHPRRTGTFELNQKR) the chain is Cytoplasmic. The chain crosses the membrane as a helical span at residues 124–144 (FIPLSKMIVLCICQMGPLFWY). The Extracellular portion of the chain corresponds to 145 to 219 (YKALYYGWMF…YYQTGTYPYW (75 aa)). Residues 220 to 240 (LYFQAASLLLSIISISWSVVV) form a helical membrane-spanning segment. Residues 241 to 274 (QNRSLRMIRDDKVNIWPHEAVLQFCWRFLTILAR) are Cytoplasmic-facing. 2 consecutive transmembrane segments (helical) span residues 275–295 (IITLVALVLIFGINVVPLISV) and 296–316 (HLLVTLVHVIFLQAIHIDACT). A topological domain (extracellular) is located at residue His-317. A helical transmembrane segment spans residues 318–338 (IEKLLLLINTFIHIFIPFNMV). The Cytoplasmic segment spans residues 339 to 353 (EGNTRWRYLTAYSVE). Residues 354–374 (FIEMMLVCWLLPLSLNTFPYI) traverse the membrane as a helical segment. Residues 375 to 378 (EKVQ) lie on the Extracellular side of the membrane. The helical transmembrane segment at 379-399 (VGVPISFIAGIAIMMMYYQFF) threads the bilayer. Residues 400–458 (HPNRRQLIVTQSQEDLSLNVQKSVETLTPKLESSLEISGEQNTSQDLVSELLLDVEHEN) lie on the Cytoplasmic side of the membrane.

The protein belongs to the XK family. Post-translationally, cleavage by ced-3 activates ced-8 function in promoting phosphatidylserine exposure at the surface of apoptotic cells.

It is found in the cell membrane. The enzyme catalyses a 1,2-diacyl-sn-glycero-3-phospho-L-serine(in) = a 1,2-diacyl-sn-glycero-3-phospho-L-serine(out). Its function is as follows. Phospholipid scramblase that acts downstream of ced-9 and caspase ced-3 to promote phosphatidylserine exposure on apoptotic cell surface. Phosphatidylserine is a specific marker only present at the surface of apoptotic cells and acts as a specific signal for engulfment. Regulates apoptosis kinetics during embryonic development. Not required for engulfment of germ cell corpses. The polypeptide is Cell death abnormality protein 8 (Caenorhabditis elegans).